The primary structure comprises 137 residues: Basic phospholipase A2 homolog Bsc-K49 (137 aa).

A signal peptide spans 1-16; it reads MRTLWIVAVLLVGVEG. Intrachain disulfides connect Cys42/Cys131, Cys44/Cys60, Cys59/Cys111, Cys65/Cys137, Cys66/Cys104, Cys73/Cys97, and Cys91/Cys102. Residues 121–133 are important for membrane-damaging activities in eukaryotes and bacteria; heparin-binding; the sequence is KNYKITMKMFCKK.

The protein belongs to the phospholipase A2 family. Group II subfamily. K49 sub-subfamily. In terms of assembly, homodimer; non-covalently linked. As to expression, expressed by the venom gland.

The protein resides in the secreted. In terms of biological role, snake venom phospholipase A2 that lacks enzymatic activity. Is myotoxic, and displays edema-inducing activities. A model of myotoxic mechanism has been proposed: an apo Lys49-PLA2 is activated by the entrance of a hydrophobic molecule (e.g. fatty acid) at the hydrophobic channel of the protein leading to a reorientation of a monomer. This reorientation causes a transition between 'inactive' to 'active' states, causing alignment of C-terminal and membrane-docking sites (MDoS) side-by-side and putting the membrane-disruption sites (MDiS) in the same plane, exposed to solvent and in a symmetric position for both monomers. The MDoS region stabilizes the toxin on membrane by the interaction of charged residues with phospholipid head groups. Subsequently, the MDiS region destabilizes the membrane with penetration of hydrophobic residues. This insertion causes a disorganization of the membrane, allowing an uncontrolled influx of ions (i.e. calcium and sodium), and eventually triggering irreversible intracellular alterations and cell death. This Bothriechis schlegelii (Eyelash palm pitviper) protein is Basic phospholipase A2 homolog Bsc-K49.